A 79-amino-acid polypeptide reads, in one-letter code: Protein RALF-like 15 (79 aa).

An N-terminal signal peptide occupies residues 1–28; that stretch reads MGMSKSIKVIVSLALILFLALAATKVEA. Intrachain disulfides connect Cys-46/Cys-54 and Cys-66/Cys-72.

The protein belongs to the plant rapid alkalinization factor (RALF) family.

The protein localises to the secreted. In terms of biological role, cell signaling peptide that may regulate plant stress, growth, and development. Mediates a rapid alkalinization of extracellular space by mediating a transient increase in the cytoplasmic Ca(2+) concentration leading to a calcium-dependent signaling events through a cell surface receptor and a concomitant activation of some intracellular mitogen-activated protein kinases. In Arabidopsis thaliana (Mouse-ear cress), this protein is Protein RALF-like 15 (RALFL15).